The sequence spans 196 residues: ATP-dependent Clp protease proteolytic subunit (196 aa).

Catalysis depends on S96, which acts as the Nucleophile. Residue H121 is part of the active site.

This sequence belongs to the peptidase S14 family. In terms of assembly, fourteen ClpP subunits assemble into 2 heptameric rings which stack back to back to give a disk-like structure with a central cavity, resembling the structure of eukaryotic proteasomes.

It localises to the cytoplasm. It carries out the reaction Hydrolysis of proteins to small peptides in the presence of ATP and magnesium. alpha-casein is the usual test substrate. In the absence of ATP, only oligopeptides shorter than five residues are hydrolyzed (such as succinyl-Leu-Tyr-|-NHMec, and Leu-Tyr-Leu-|-Tyr-Trp, in which cleavage of the -Tyr-|-Leu- and -Tyr-|-Trp bonds also occurs).. Cleaves peptides in various proteins in a process that requires ATP hydrolysis. Has a chymotrypsin-like activity. Plays a major role in the degradation of misfolded proteins. The chain is ATP-dependent Clp protease proteolytic subunit from Streptococcus sanguinis (strain SK36).